The chain runs to 211 residues: Fucoxanthin-chlorophyll a-c binding protein F, chloroplastic (211 aa).

Residues 1–33 constitute a chloroplast transit peptide; it reads AIACAAAPGLRGPSAFNGAALSTPAKSSSAMKM. Helical transmembrane passes span 75 to 95, 116 to 136, and 177 to 197; these read IAML…PGML, IPPG…LAVM, and GRAA…SNQP.

The protein belongs to the fucoxanthin chlorophyll protein family. As to quaternary structure, the LHC complex of chromophytic algae is composed of fucoxanthin, chlorophyll A and C bound non-covalently by fucoxanthin chlorophyll proteins (FCPs). The ratio of pigments in this LHC is; fucoxanthin: chlorophyll C: chlorophyll A; (0.6-1): (0.1-0.3): (1).

The protein localises to the plastid. The protein resides in the chloroplast thylakoid membrane. Functionally, the light-harvesting complex (LHC) functions as a light receptor, it captures and delivers excitation energy to photosystems with which it is closely associated. Energy is transferred from the carotenoid and chlorophyll C (or B) to chlorophyll A and the photosynthetic reaction centers where it is used to synthesize ATP and reducing power. This Macrocystis pyrifera (Giant kelp) protein is Fucoxanthin-chlorophyll a-c binding protein F, chloroplastic (FCPF).